The following is a 237-amino-acid chain: MTPKRALISLTSYHGPFYKDGAKTGVFVVEILRSFDTFEKHGFEVDFVSETGGFGWDEHYLPKSFIGGEDKMNFETKNSAFNKALARIKTANEVNASDYKIFFASAGHGALFDYPKAKNLQDIASKIYANGGVIAAICHGPLLFDGLIDIKTTRPLIEGKAITGFPLEGEIALGVDDILRSRKLTTVERVANKNRAKYLAPIHPWDDYSITDGKLVTGVNANSSYSTTIRAINALYS.

Catalysis depends on residues Cys-138, His-139, and Glu-170.

Belongs to the peptidase C56 family. HSP31-like subfamily. Homodimer.

It is found in the cytoplasm. The protein resides in the P-body. The enzyme catalyses methylglyoxal + H2O = (R)-lactate + H(+). In terms of biological role, catalyzes the conversion of methylglyoxal (MG) to D-lactate in a single glutathione (GSH)-independent step. May play a role in detoxifying endogenously produced glyoxals. Involved in protection against reactive oxygen species (ROS). Important for viability in stationary phase. May negatively regulate TORC1 in response to nutrient limitation. This is Probable glutathione-independent glyoxalase SNO4 from Saccharomyces cerevisiae (strain ATCC 204508 / S288c) (Baker's yeast).